We begin with the raw amino-acid sequence, 167 residues long: Signal peptidase complex catalytic subunit SEC11 (167 aa).

The Cytoplasmic portion of the chain corresponds to 1–9 (MNLRFELQK). A helical; Signal-anchor for type II membrane protein membrane pass occupies residues 10 to 30 (LLNVCFLFASAYMFWQGLAIA). Residues 31-167 (TNSASPIVVV…LGLSALLGGE (137 aa)) are Lumenal-facing. Active-site charge relay system residues include serine 44, histidine 83, and aspartate 109. Asparagine 121 is a glycosylation site (N-linked (GlcNAc...) asparagine). Residues 153 to 164 (ALLGMLGLSALL) are C-terminal short (CTS) helix.

Belongs to the peptidase S26B family. As to quaternary structure, component of the signal peptidase complex (SPC) composed of a catalytic subunit SEC11 and three accessory subunits SPC1, SPC2 and SPC3. The complex induces a local thinning of the ER membrane which is used to measure the length of the signal peptide (SP) h-region of protein substrates. This ensures the selectivity of the complex towards h-regions shorter than 18-20 amino acids. SPC associates with the translocon complex.

The protein localises to the endoplasmic reticulum membrane. It carries out the reaction Cleavage of hydrophobic, N-terminal signal or leader sequences from secreted and periplasmic proteins.. Catalytic component of the signal peptidase complex (SPC) which catalyzes the cleavage of N-terminal signal sequences from nascent proteins as they are translocated into the lumen of the endoplasmic reticulum. Specifically cleaves N-terminal signal peptides that contain a hydrophobic alpha-helix (h-region) shorter than 18-20 amino acids. The sequence is that of Signal peptidase complex catalytic subunit SEC11 (SEC11) from Saccharomyces cerevisiae (strain Lalvin QA23) (Baker's yeast).